The sequence spans 344 residues: Gibberellin receptor GID1C (344 aa).

At Ala-2 the chain carries N-acetylalanine. The Involved in the stabilization of the negatively charged intermediate by the formation of the oxyanion hole signature appears at 111–113; that stretch reads HGG. Gibberellin A4 is bound by residues 113–114, Tyr-125, and Ser-189; that span reads GS. Gibberellin A3-binding residues include Ser-114, Tyr-125, Ser-189, and Phe-236. Ser-189 is a catalytic residue. The active site involves Asp-287. Gly-318 contacts gibberellin A4. Gly-318 lines the gibberellin A3 pocket.

Belongs to the 'GDXG' lipolytic enzyme family. In terms of assembly, interacts with the DELLA proteins GAI, RGA, RGL1, RGL2 and RGL3 in a GA-dependent manner. Widely expressed.

The protein localises to the nucleus. In terms of biological role, functions as a soluble gibberellin (GA) receptor. GA is an essential hormone that regulates growth and development in plants. Binds with high affinity the biologically active gibberellin GA4, but has no affinity for the biologically inactive GAs. In response to GA, interacts with specific DELLA proteins, known as repressors of GA-induced growth, and targets them for degradation via proteasome. Seems to be required for GA signaling that controls root growth, seed germination and stem elongation. Partially redundant with GID1A and GID1B. The polypeptide is Gibberellin receptor GID1C (GID1C) (Arabidopsis thaliana (Mouse-ear cress)).